The following is a 199-amino-acid chain: Phosphatidylethanolamine N-methyltransferase (199 aa).

Over 1 to 12 (MSWLLGYMDPTE) the chain is Lumenal. Positions 13–33 (PSFVAAVITIVFNPLFWNVVA) form an intramembrane region, helical. Residues 34-45 (RWEQRTRKLSRA) lie on the Lumenal side of the membrane. The helical transmembrane segment at 46-66 (FGSPHLACYSLGICILLLNIL) threads the bilayer. Topologically, residues 67–93 (RSHCFTQAMMSQPKMEGLDNHTTYFLG) are cytoplasmic. The helical transmembrane segment at 94-114 (LAFLGWGFVFVLSSFYALGFT) threads the bilayer. Position 98–100 (98–100 (GWG)) interacts with S-adenosyl-L-methionine. Residues 115–157 (GTFLGDYFGILKESRVTTFPFSVLDNPMYWGSTANYLGWALMH) are Lumenal-facing. Residues 158–178 (ASPTGLLLTVLVAIVYVVALL) traverse the membrane as a helical segment. At 179–199 (YEEPFTAEIYRQKATRLHKRS) the chain is on the cytoplasmic side. 180 to 181 (EE) provides a ligand contact to S-adenosyl-L-methionine.

The protein belongs to the class VI-like SAM-binding methyltransferase superfamily. PEMT/PEM2 methyltransferase family. In terms of tissue distribution, expressed in liver (at protein level).

It localises to the endoplasmic reticulum membrane. Its subcellular location is the mitochondrion membrane. The enzyme catalyses a 1,2-diacyl-sn-glycero-3-phospho-N-methylethanolamine + S-adenosyl-L-methionine = a 1,2-diacyl-sn-glycero-3-phospho-N,N-dimethylethanolamine + S-adenosyl-L-homocysteine + H(+). The catalysed reaction is a 1,2-diacyl-sn-glycero-3-phospho-N,N-dimethylethanolamine + S-adenosyl-L-methionine = a 1,2-diacyl-sn-glycero-3-phosphocholine + S-adenosyl-L-homocysteine + H(+). It catalyses the reaction a 1,2-diacyl-sn-glycero-3-phosphoethanolamine + S-adenosyl-L-methionine = a 1,2-diacyl-sn-glycero-3-phospho-N-methylethanolamine + S-adenosyl-L-homocysteine + H(+). It carries out the reaction 1,2-di-(9Z-octadecenoyl)-sn-glycero-3-phosphoethanolamine + S-adenosyl-L-methionine = 1,2-di-(9Z-octadecenoyl)-sn-glycero-3-phospho-N-methylethanolamine + S-adenosyl-L-homocysteine + H(+). The enzyme catalyses 1,2-di-(9Z-octadecenoyl)-sn-glycero-3-phospho-N-methylethanolamine + S-adenosyl-L-methionine = 1,2-di-(9Z-octadecenoyl)-sn-glycero-3-phospho-N,N-dimethylethanolamine + S-adenosyl-L-homocysteine + H(+). The catalysed reaction is 1,2-di-(9Z-octadecenoyl)-sn-glycero-3-phospho-N,N-dimethylethanolamine + S-adenosyl-L-methionine = 1,2-di-(9Z-octadecenoyl)-sn-glycero-3-phosphocholine + S-adenosyl-L-homocysteine + H(+). It catalyses the reaction 1,2-di-(9Z,12Z-octadecadienoyl)-sn-glycero-3-phosphoethanolamine + S-adenosyl-L-methionine = 1,2-di-(9Z,12Z-octadecadienoyl)-sn-glycero-3-phospho-N-methylethanolamine + S-adenosyl-L-homocysteine + H(+). It carries out the reaction 1,2-di-(9Z,12Z-octadecadienoyl)-sn-glycero-3-phospho-N-methylethanolamine + S-adenosyl-L-methionine = 1,2-di-(9Z,12Z-octadecadienoyl)-sn-glycero-3-phospho-N,N-dimethylethanolamine + S-adenosyl-L-homocysteine + H(+). The enzyme catalyses 1,2-di-(9Z,12Z-octadecadienoyl)-sn-glycero-3-phospho-N,N-dimethylethanolamine + S-adenosyl-L-methionine = 1,2-di-(9Z,12Z-octadecadienoyl)-sn-glycero-3-phosphocholine + S-adenosyl-L-homocysteine + H(+). The catalysed reaction is 1,2-di-(9Z,12Z,15Z-octadecatrienoyl)-sn-glycero-3-phosphoethanolamine + S-adenosyl-L-methionine = 1,2-di-(9Z,12Z,15Z-octadecatrienoyl)-sn-glycero-3-phospho-N-methylethanolamine + S-adenosyl-L-homocysteine + H(+). It catalyses the reaction 1,2-di-(9Z,12Z,15Z-octadecatrienoyl)-sn-glycero-3-phospho-N-methylethanolamine + S-adenosyl-L-methionine = 1,2-di-(9Z,12Z,15Z-octadecatrienoyl)-sn-glycero-3-phospho-N,N-dimethylethanolamine + S-adenosyl-L-homocysteine + H(+). It carries out the reaction 1,2-di-(9Z,12Z,15Z-octadecatrienoyl)-sn-glycero-3-phospho-N,N-dimethylethanolamine + S-adenosyl-L-methionine = 1,2-di-(9Z,12Z,15Z-octadecatrienoyl)-sn-glycero-3-phosphocholine + S-adenosyl-L-homocysteine + H(+). The enzyme catalyses 1-hexadecanoyl-2-(4Z,7Z,10Z,13Z,16Z,19Z-docosahexaenoyl)-sn-glycero-3-phosphoethanolamine + S-adenosyl-L-methionine = 1-hexadecanoyl-2-(4Z,7Z,10Z,13Z,16Z,19Z-docosahexaenoyl)-sn-glycero-3-phospho-N-methylethanolamine + S-adenosyl-L-homocysteine + H(+). The catalysed reaction is 1-hexadecanoyl-2-(4Z,7Z,10Z,13Z,16Z,19Z-docosahexaenoyl)-sn-glycero-3-phospho-N-methylethanolamine + S-adenosyl-L-methionine = 1-hexadecanoyl-2-(4Z,7Z,10Z,13Z,16Z,19Z-docosahexaenoyl)-sn-glycero-3-phospho-N,N-dimethylethanolamine + S-adenosyl-L-homocysteine + H(+). It catalyses the reaction 1-hexadecanoyl-2-(4Z,7Z,10Z,13Z,16Z,19Z-docosahexaenoyl)-sn-glycero-3-phospho-N,N-dimethylethanolamine + S-adenosyl-L-methionine = 1-hexadecanoyl-2-(4Z,7Z,10Z,13Z,16Z,19Z-docosahexaenoyl)-sn-glycero-3-phosphocholine + S-adenosyl-L-homocysteine + H(+). Its pathway is phospholipid metabolism; phosphatidylcholine biosynthesis. Catalyzes the three sequential steps of the methylation pathway for the biosynthesis of phosphatidylcholine, a critical and essential component for membrane structure. Uses S-adenosylmethionine (S-adenosyl-L-methionine, SAM or AdoMet) as the methyl group donor for the methylation of phosphatidylethanolamine (1,2-diacyl-sn-glycero-3-phosphoethanolamine, PE) to phosphatidylmonomethylethanolamine (1,2-diacyl-sn-glycero-3-phospho-N-methylethanolamine, PMME), PMME to phosphatidyldimethylethanolamine (1,2-diacyl-sn-glycero-3-phospho-N,N-dimethylethanolamine, PDME), and PDME to phosphatidylcholine (1,2-diacyl-sn-glycero-3-phosphocholine, PC), producing S-adenosyl-L-homocysteine in each step. This Mus musculus (Mouse) protein is Phosphatidylethanolamine N-methyltransferase.